The sequence spans 452 residues: Plasminogen-binding protein PgbA (452 aa).

Residues 265 to 452 (QEAIKEPKKA…RRKALEAGKK (188 aa)) are disordered. Basic and acidic residues-rich tracts occupy residues 284–310 (LEEKNYQKAERKLDAKEERRYLRDERK) and 317–373 (KAME…KEPS). The span at 374 to 391 (DGNNATQQGEKQNAPKEN) shows a compositional bias: polar residues. Over residues 392–452 (NAQKEENKPN…RRKALEAGKK (61 aa)) the composition is skewed to basic and acidic residues.

It localises to the cell surface. Its function is as follows. Binds plasminogen, specifically, and in a concentration and lysine-dependent manner. Plasminogen is the precursor of plasmin, a serine protease that cleaves fibrin, fibronectin, laminin and vitronectin. Acquisition of plasminogen/plasmin could enable H.pylori to degrade host components. The sequence is that of Plasminogen-binding protein PgbA (pgbA) from Helicobacter pylori (strain ATCC 700392 / 26695) (Campylobacter pylori).